The primary structure comprises 183 residues: uncharacterized protein (183 aa).

Transmembrane regions (helical) follow at residues Leu-37–Phe-59, Ala-79–Val-98, Trp-110–Leu-132, and Ala-142–Phe-161.

Its subcellular location is the cell membrane. This is an uncharacterized protein from Archaeoglobus fulgidus (strain ATCC 49558 / DSM 4304 / JCM 9628 / NBRC 100126 / VC-16).